A 187-amino-acid chain; its full sequence is uncharacterized protein (187 aa).

This is an uncharacterized protein from Manihot esculenta (Cassava).